A 66-amino-acid chain; its full sequence is Alpha-conotoxin GID (66 aa).

The first 21 residues, 1–21, serve as a signal peptide directing secretion; sequence MGMRMMFTVFLLVVLAATIVS. Positions 22 to 44 are excised as a propeptide; it reads FTSDRASDGRNVAAKAFHRIGRT. Residues 45 to 48 are N-terminal tail important for activity on alpha-3-beta-2/CHRNA3-CHRNB2 and alpha-4-beta-2/CHRNA4-CHRNB2 nAChR; it reads IRDE. The residue at position 48 (Glu48) is a 4-carboxyglutamate. Intrachain disulfides connect Cys49/Cys55 and Cys50/Cys63. The segment at 51-53 is ser-Xaa-Pro motif, crucial for potent interaction with nAChR; it reads SNP. Residue Pro60 is modified to 4-hydroxyproline.

Belongs to the conotoxin A superfamily. Post-translationally, gamma-carboxyglutamation of Glu-48 seems to be not important for nAChR inhibition, since synthetic peptides without this modification do not show change in inhibition of alpha-7/CHRNA7 and alpha-3-beta-2/CHRNA3-CHRNB2 nAChR and show a 2.3-fold increase in inhibition of alpha-4-beta-2/CHRNA4-CHRNB2 nAChR. Hydroxylation of Pro-60 seems to be important for nAChR inhibition, since synthetic peptides without this modification show a small decrease in inhibition of alpha-7/CHRNA7 and alpha-3-beta-2/CHRNA3-CHRNB2 nAChR and a very important decrease in inhibition of alpha-4-beta-2/CHRNA4-CHRNB2 nAChR. In terms of processing, an amidation of Cys-63 increases potency against alpha-7/CHRNA7 (2.6-fold) and alpha-3-beta-2/CHRNA3-CHRNB2 (2-fold) nAChR. On the other hand, the peptide has no more activity on alpha-4-beta-2/CHRNA4-CHRNB2 nAChR with an amidated Cys-63. In terms of tissue distribution, expressed by the venom duct.

The protein localises to the secreted. Alpha-conotoxins act on postsynaptic membranes, they bind to the nicotinic acetylcholine receptors (nAChR) and thus inhibit them. This toxin reversibly blocks alpha-3-beta-2/CHRNA3-CHRNB2 (IC(50)=3.1-5.1 nM), alpha-7/CHRNA7 (IC(50)=4.5-5.1 nM), and alpha-4-beta-2/CHRNA4-CHRNB2 (IC(50)=128.6-390 nM) nAChRs. The chain is Alpha-conotoxin GID from Conus geographus (Geography cone).